We begin with the raw amino-acid sequence, 391 residues long: Casein kinase II subunit alpha 3 (391 aa).

A Protein kinase domain is found at 39-324 (YQLVRKLGRG…AREAMEHPYF (286 aa)). ATP contacts are provided by residues 45–53 (LGRGKYSEV) and K68. D156 (proton acceptor) is an active-site residue.

It belongs to the protein kinase superfamily. Ser/Thr protein kinase family. CK2 subfamily. In terms of assembly, heterotetramer composed of two catalytic subunits (alpha chain and/or alpha' chain) and two regulatory subunits (beta chains). Interacts with PML. Detected in blood platelets and megakaryocyte cell lines. Poorly expressed in lung. Highly expressed in lung tumor tissues.

The enzyme catalyses L-seryl-[protein] + ATP = O-phospho-L-seryl-[protein] + ADP + H(+). It carries out the reaction L-threonyl-[protein] + ATP = O-phospho-L-threonyl-[protein] + ADP + H(+). In terms of biological role, probable catalytic subunit of a constitutively active serine/threonine-protein kinase complex that phosphorylates a large number of substrates containing acidic residues C-terminal to the phosphorylated serine or threonine. Amplification-dependent oncogene; promotes cell proliferation and tumorigenesis by down-regulating expression of the tumor suppressor protein, PML. May play a role in the pathogenesis of the lung cancer development and progression. The chain is Casein kinase II subunit alpha 3 (CSNK2A3) from Homo sapiens (Human).